A 111-amino-acid chain; its full sequence is uncharacterized protein (111 aa).

An N-terminal signal peptide occupies residues 1-18; the sequence is MGKSMEEGIFVKVFPSKA.

This is an uncharacterized protein from Acidianus convivator (ATV).